A 71-amino-acid chain; its full sequence is UPF0346 protein Bcer98_1690 (71 aa).

This sequence belongs to the UPF0346 family.

The protein is UPF0346 protein Bcer98_1690 of Bacillus cytotoxicus (strain DSM 22905 / CIP 110041 / 391-98 / NVH 391-98).